The sequence spans 83 residues: Cytochrome b559 subunit alpha (83 aa).

Residues valine 21 to tryptophan 35 form a helical membrane-spanning segment. Histidine 23 contacts heme.

The protein belongs to the PsbE/PsbF family. Heterodimer of an alpha subunit and a beta subunit. PSII is composed of 1 copy each of membrane proteins PsbA, PsbB, PsbC, PsbD, PsbE, PsbF, PsbH, PsbI, PsbJ, PsbK, PsbL, PsbM, PsbT, PsbX, PsbY, PsbZ, Psb30/Ycf12, at least 3 peripheral proteins of the oxygen-evolving complex and a large number of cofactors. It forms dimeric complexes. Heme b is required as a cofactor.

It localises to the plastid. The protein localises to the chloroplast thylakoid membrane. In terms of biological role, this b-type cytochrome is tightly associated with the reaction center of photosystem II (PSII). PSII is a light-driven water:plastoquinone oxidoreductase that uses light energy to abstract electrons from H(2)O, generating O(2) and a proton gradient subsequently used for ATP formation. It consists of a core antenna complex that captures photons, and an electron transfer chain that converts photonic excitation into a charge separation. The protein is Cytochrome b559 subunit alpha of Marchantia polymorpha (Common liverwort).